We begin with the raw amino-acid sequence, 188 residues long: Photosystem I assembly protein Ycf4 (188 aa).

A run of 2 helical transmembrane segments spans residues 26 to 46 (IWWG…GLSS) and 70 to 90 (LLFY…TIIL).

This sequence belongs to the Ycf4 family.

The protein localises to the cellular thylakoid membrane. Functionally, seems to be required for the assembly of the photosystem I complex. In Rippkaea orientalis (strain PCC 8801 / RF-1) (Cyanothece sp. (strain PCC 8801)), this protein is Photosystem I assembly protein Ycf4.